The sequence spans 517 residues: Cytochrome P450 monooxygenase 124 (517 aa).

Residues 3 to 23 (SLLVLFVSLLALGALKKHLDF) form a helical membrane-spanning segment. Residue cysteine 453 participates in heme binding.

Belongs to the cytochrome P450 family. Requires heme as cofactor.

The protein localises to the membrane. It participates in secondary metabolite biosynthesis. Functionally, cytochrome P450 monooxygenase that is able to use trans-stilbene as a substrate for oxidation. The polypeptide is Cytochrome P450 monooxygenase 124 (Postia placenta (strain ATCC 44394 / Madison 698-R) (Brown rot fungus)).